Reading from the N-terminus, the 61-residue chain is Small ribosomal subunit protein uS14 (61 aa).

Zn(2+) contacts are provided by Cys-24, Cys-27, Cys-40, and Cys-43.

The protein belongs to the universal ribosomal protein uS14 family. Zinc-binding uS14 subfamily. In terms of assembly, part of the 30S ribosomal subunit. Contacts proteins S3 and S10. Zn(2+) is required as a cofactor.

Functionally, binds 16S rRNA, required for the assembly of 30S particles and may also be responsible for determining the conformation of the 16S rRNA at the A site. The polypeptide is Small ribosomal subunit protein uS14 (Geotalea uraniireducens (strain Rf4) (Geobacter uraniireducens)).